Consider the following 144-residue polypeptide: uncharacterized protein (144 aa).

The N-acetyltransferase domain occupies 2-144; that stretch reads IELDAINPNN…EDSVLLSKKL (143 aa).

Belongs to the acetyltransferase family.

The protein localises to the cytoplasm. It localises to the nucleus. This is an uncharacterized protein from Schizosaccharomyces pombe (strain 972 / ATCC 24843) (Fission yeast).